The primary structure comprises 107 residues: MYAVFMSGGKQYRVKKNQIIQLEKLNNSPGSIIEFDKILMISAKKEVKIGEPFLKGTKIKAHVENHGRLKKIKIIKFNRRKHYKKKQGHRQYFTNVKILDINNFNGK.

This sequence belongs to the bacterial ribosomal protein bL21 family. Part of the 50S ribosomal subunit. Contacts protein L20.

This protein binds to 23S rRNA in the presence of protein L20. This chain is Large ribosomal subunit protein bL21, found in Buchnera aphidicola subsp. Schizaphis graminum (strain Sg).